Here is a 225-residue protein sequence, read N- to C-terminus: MKQILNDSWWQQLKDEFDKPYYQELREMLKREYAEHTVYPEPNDIYNALHYTSYENVKVVILGQDPYHGPGQAHGLSFSVQPGVNPPPSLKNIFIELQNDIGADIPNHGSLVSWAKQGVLLLNTVLTVRRGQANSHKGKGWEQLTDSIIDVLNKRDKPVVFILWGRHAQMKKERIDTSKHFIIQSPHPSPFSARNGFFGSRPFSRANQYLEQIGDEPIDWSLPNL.

The active-site Proton acceptor is the D65.

Belongs to the uracil-DNA glycosylase (UDG) superfamily. UNG family.

It is found in the cytoplasm. It carries out the reaction Hydrolyzes single-stranded DNA or mismatched double-stranded DNA and polynucleotides, releasing free uracil.. In terms of biological role, excises uracil residues from the DNA which can arise as a result of misincorporation of dUMP residues by DNA polymerase or due to deamination of cytosine. The polypeptide is Uracil-DNA glycosylase (Bacillus licheniformis (strain ATCC 14580 / DSM 13 / JCM 2505 / CCUG 7422 / NBRC 12200 / NCIMB 9375 / NCTC 10341 / NRRL NRS-1264 / Gibson 46)).